A 126-amino-acid polypeptide reads, in one-letter code: Large ribosomal subunit protein bL19 (126 aa).

This sequence belongs to the bacterial ribosomal protein bL19 family.

Functionally, this protein is located at the 30S-50S ribosomal subunit interface and may play a role in the structure and function of the aminoacyl-tRNA binding site. The protein is Large ribosomal subunit protein bL19 of Bordetella petrii (strain ATCC BAA-461 / DSM 12804 / CCUG 43448).